Consider the following 476-residue polypeptide: Eukaryotic translation initiation factor 3 subunit L (476 aa).

Positions 257-452 (DAIRMFSHIL…DLDYALENDL (196 aa)) constitute a PCI domain.

It belongs to the eIF-3 subunit L family. As to quaternary structure, component of the eukaryotic translation initiation factor 3 (eIF-3) complex.

The protein resides in the cytoplasm. Component of the eukaryotic translation initiation factor 3 (eIF-3) complex, which is involved in protein synthesis of a specialized repertoire of mRNAs and, together with other initiation factors, stimulates binding of mRNA and methionyl-tRNAi to the 40S ribosome. The eIF-3 complex specifically targets and initiates translation of a subset of mRNAs involved in cell proliferation. This Aspergillus niger (strain ATCC MYA-4892 / CBS 513.88 / FGSC A1513) protein is Eukaryotic translation initiation factor 3 subunit L.